Here is a 724-residue protein sequence, read N- to C-terminus: Catalase-peroxidase (724 aa).

Residues 98–226 (WHSAGTYRIA…LATVMMGLIY (129 aa)) constitute a cross-link (tryptophyl-tyrosyl-methioninium (Trp-Tyr) (with M-252)). The active-site Proton acceptor is the His-99. The tryptophyl-tyrosyl-methioninium (Tyr-Met) (with W-98) cross-link spans 226 to 252 (YVNPEGVDGNPDPLKTAQDMRVTFARM). Residue His-267 participates in heme b binding.

It belongs to the peroxidase family. Peroxidase/catalase subfamily. As to quaternary structure, homodimer or homotetramer. It depends on heme b as a cofactor. Formation of the three residue Trp-Tyr-Met cross-link is important for the catalase, but not the peroxidase activity of the enzyme.

It catalyses the reaction H2O2 + AH2 = A + 2 H2O. The enzyme catalyses 2 H2O2 = O2 + 2 H2O. Bifunctional enzyme with both catalase and broad-spectrum peroxidase activity. The polypeptide is Catalase-peroxidase (Vibrio cholerae serotype O1 (strain ATCC 39541 / Classical Ogawa 395 / O395)).